We begin with the raw amino-acid sequence, 397 residues long: Tryptophan synthase beta chain (397 aa).

Lysine 88 carries the N6-(pyridoxal phosphate)lysine modification.

This sequence belongs to the TrpB family. As to quaternary structure, tetramer of two alpha and two beta chains. It depends on pyridoxal 5'-phosphate as a cofactor.

It catalyses the reaction (1S,2R)-1-C-(indol-3-yl)glycerol 3-phosphate + L-serine = D-glyceraldehyde 3-phosphate + L-tryptophan + H2O. Its pathway is amino-acid biosynthesis; L-tryptophan biosynthesis; L-tryptophan from chorismate: step 5/5. The beta subunit is responsible for the synthesis of L-tryptophan from indole and L-serine. The polypeptide is Tryptophan synthase beta chain (trpB) (Haemophilus influenzae (strain ATCC 51907 / DSM 11121 / KW20 / Rd)).